The chain runs to 133 residues: Interleukin-4 (133 aa).

Positions 1-24 (MGLTYQLIPALVCLLAFTSTFVHG) are cleaved as a signal peptide. N28, N45, N62, N84, N96, and N102 each carry an N-linked (GlcNAc...) asparagine glycan. 2 disulfide bridges follow: C48–C85 and C70–C113.

This sequence belongs to the IL-4/IL-13 family.

Its subcellular location is the secreted. Its function is as follows. Participates in at least several B-cell activation processes as well as of other cell types. It is a costimulator of DNA-synthesis. It induces the expression of class II MHC molecules on resting B-cells. It enhances both secretion and cell surface expression of IgE and IgG1. It also regulates the expression of the low affinity Fc receptor for IgE (CD23) on both lymphocytes and monocytes. Positively regulates IL31RA expression in macrophages. Stimulates autophagy in dendritic cells by interfering with mTORC1 signaling and through the induction of RUFY4. The sequence is that of Interleukin-4 (IL4) from Felis catus (Cat).